Reading from the N-terminus, the 751-residue chain is Myb-related protein A (751 aa).

The tract at residues 1-22 (MAKRSRSEDEDDDLQYADHDYE) is disordered. HTH myb-type domains lie at 30–81 (KKLW…QKVL), 82–137 (NPEL…NPEV), and 138–188 (KKSS…RRKV). 3 consecutive DNA-binding regions (H-T-H motif) follow at residues 58–81 (WTLIASHLQNRSDFQCQHRWQKVL), 110–133 (WSLIAKHLKGRIGKQCRERWHNHL), and 161–184 (WAEIAKLLPGRTDNSIKNHWNSTM). Lys199 participates in a covalent cross-link: Glycyl lysine isopeptide (Lys-Gly) (interchain with G-Cter in SUMO2). A transcriptional activation domain region spans residues 230–294 (IPGYQYVSPD…RLPPQPGSFS (65 aa)). The negative regulatory domain stretch occupies residues 297 to 552 (SGSFLMDDSM…IRRSILGTTP (256 aa)). At Lys393 the chain carries N6-acetyllysine. Residues Lys591 and Lys601 each participate in a glycyl lysine isopeptide (Lys-Gly) (interchain with G-Cter in SUMO2) cross-link.

In terms of assembly, component of the DREAM complex (also named LINC complex) at least composed of E2F4, E2F5, LIN9, LIN37, LIN52, LIN54, MYBL1, MYBL2, RBL1, RBL2, RBBP4, TFDP1 and TFDP2. The complex exists in quiescent cells where it represses cell cycle-dependent genes. It dissociates in S phase when LIN9, LIN37, LIN52 and LIN54 form a subcomplex that binds to MYBL2. As to expression, predominantly in the testis. Very low levels in the ovaries, spleen and brain.

It is found in the nucleus. In terms of biological role, transcription factor that specifically recognizes the sequence 5'-YAAC[GT]G-3'. Acts as a master regulator of male meiosis by promoting expression of piRNAs: activates expression of both piRNA precursor RNAs and expression of protein-coding genes involved in piRNA metabolism, such as PIWIL1. The piRNA metabolic process mediates the repression of transposable elements during meiosis by forming complexes composed of piRNAs and Piwi proteins and governs the methylation and subsequent repression of transposons, which is essential for the germline integrity. Transcriptional activator of SOX30. This is Myb-related protein A (Mybl1) from Mus musculus (Mouse).